A 503-amino-acid chain; its full sequence is Cell wall integrity and stress response component 2 (503 aa).

The signal sequence occupies residues 1-23 (MHLDLIHKSFILVWLIYIRAALA). Residues 24–325 (DQFTYKACYS…KGLSGGAIAG (302 aa)) are Extracellular-facing. Residues 25–118 (QFTYKACYSA…SSAMNVYINN (94 aa)) form the WSC domain. The segment at 124-260 (DSTSSTATST…STPSSTSIGT (137 aa)) is disordered. A helical transmembrane segment spans residues 326 to 346 (VVVGVVCGTVALLALALFFFV). At 347 to 503 (WKKRRQSSQH…AKDSNNSSLR (157 aa)) the chain is on the cytoplasmic side. Threonine 402 is subject to Phosphothreonine. A phosphoserine mark is found at serine 455 and serine 458. The segment at 470–503 (IVNPDNVSSNIGSNVSDGDDDYDDAKDSNNSSLR) is disordered.

N-glycosylated.

Its subcellular location is the cell membrane. The protein is Cell wall integrity and stress response component 2 (WSC2) of Saccharomyces cerevisiae (strain ATCC 204508 / S288c) (Baker's yeast).